The chain runs to 396 residues: Tail sheath protein (396 aa).

It belongs to the myoviridae tail sheath protein family. As to quaternary structure, homomultimer.

It localises to the virion. The protein localises to the host cytoplasm. Its function is as follows. Polymerizes as an extended helical structure around the baseplate-tail tube complex. During ejection, the sheath shifts to a contracted form, thereby making the inner tail tube protrude through the host cell envelope. The sequence is that of Tail sheath protein (FI) from Enterobacteriaceae (Bacteriophage P2).